The following is a 303-amino-acid chain: Coenzyme PQQ synthesis protein B (303 aa).

This sequence belongs to the PqqB family.

Its pathway is cofactor biosynthesis; pyrroloquinoline quinone biosynthesis. Functionally, may be involved in the transport of PQQ or its precursor to the periplasm. The protein is Coenzyme PQQ synthesis protein B of Pseudomonas putida (strain W619).